The sequence spans 199 residues: Small ribosomal subunit protein uS4 (199 aa).

The S4 RNA-binding domain occupies 94–157 (SRLDNIVYRM…QNVPTILASI (64 aa)).

This sequence belongs to the universal ribosomal protein uS4 family. Part of the 30S ribosomal subunit. Contacts protein S5. The interaction surface between S4 and S5 is involved in control of translational fidelity.

In terms of biological role, one of the primary rRNA binding proteins, it binds directly to 16S rRNA where it nucleates assembly of the body of the 30S subunit. Functionally, with S5 and S12 plays an important role in translational accuracy. The chain is Small ribosomal subunit protein uS4 from Mycoplasma mobile (strain ATCC 43663 / 163K / NCTC 11711) (Mesomycoplasma mobile).